The primary structure comprises 447 residues: Methylenetetrahydrofolate--tRNA-(uracil-5-)-methyltransferase TrmFO (447 aa).

Residue 10-15 coordinates FAD; that stretch reads GAGLAG.

It belongs to the MnmG family. TrmFO subfamily. It depends on FAD as a cofactor.

The protein resides in the cytoplasm. The catalysed reaction is uridine(54) in tRNA + (6R)-5,10-methylene-5,6,7,8-tetrahydrofolate + NADH + H(+) = 5-methyluridine(54) in tRNA + (6S)-5,6,7,8-tetrahydrofolate + NAD(+). It carries out the reaction uridine(54) in tRNA + (6R)-5,10-methylene-5,6,7,8-tetrahydrofolate + NADPH + H(+) = 5-methyluridine(54) in tRNA + (6S)-5,6,7,8-tetrahydrofolate + NADP(+). Functionally, catalyzes the folate-dependent formation of 5-methyl-uridine at position 54 (M-5-U54) in all tRNAs. The protein is Methylenetetrahydrofolate--tRNA-(uracil-5-)-methyltransferase TrmFO of Lactococcus lactis subsp. lactis (strain IL1403) (Streptococcus lactis).